Reading from the N-terminus, the 156-residue chain is Small ribosomal subunit protein uS7 (156 aa).

It belongs to the universal ribosomal protein uS7 family. In terms of assembly, part of the 30S ribosomal subunit. Contacts proteins S9 and S11.

Functionally, one of the primary rRNA binding proteins, it binds directly to 16S rRNA where it nucleates assembly of the head domain of the 30S subunit. Is located at the subunit interface close to the decoding center, probably blocks exit of the E-site tRNA. The sequence is that of Small ribosomal subunit protein uS7 from Yersinia enterocolitica serotype O:8 / biotype 1B (strain NCTC 13174 / 8081).